The sequence spans 301 residues: Sulfate adenylyltransferase subunit 2 (301 aa).

The interval 279–301 is disordered; the sequence is RQGRMIDHDSSGSMEEKKKQGYF.

This sequence belongs to the PAPS reductase family. CysD subfamily. Heterodimer composed of CysD, the smaller subunit, and CysN.

It carries out the reaction sulfate + ATP + H(+) = adenosine 5'-phosphosulfate + diphosphate. It functions in the pathway sulfur metabolism; hydrogen sulfide biosynthesis; sulfite from sulfate: step 1/3. With CysN forms the ATP sulfurylase (ATPS) that catalyzes the adenylation of sulfate producing adenosine 5'-phosphosulfate (APS) and diphosphate, the first enzymatic step in sulfur assimilation pathway. APS synthesis involves the formation of a high-energy phosphoric-sulfuric acid anhydride bond driven by GTP hydrolysis by CysN coupled to ATP hydrolysis by CysD. In Marinomonas sp. (strain MWYL1), this protein is Sulfate adenylyltransferase subunit 2.